The chain runs to 473 residues: MKKNIGKITQIISAVVDVKFTNKGKLPQILNALECYNDKQRIVLEIAQHIGDDTVRCIAMNSTEGLVRGMEVVDTGSPISIPVGIETLGRIMNVVGEPIDGKGKIKGSSISSIYKSAPSFTQQSTDRNILVTGIKVVDLLAPYTKGGKIGLFGGAGVGKTVLIMELINNVAKAHGGYTVFAGVGERTREGNDLYHEMIDSGVINLEEPEKSKVALVYGQMNEPPGARARVALTGLTVAESFRDMNEGQDVLFFVDNIFRFTQAGSEVSALLGRIPSAVGYQPTLATDMGELQERITSTKHGSITSVQAIYVPADDLTDPAPATSFAHLDATIVLSRQIAELGIYPAVDPLDSTSQVLDPMIVGEEHYNVARKVQQILQTYKSLQDIIAILGMDELSEEDKLTVSRARKIQRFLSQPFHVAEVFTGAEGKFVNLADTIAGFKGLTEGKYDDLPEAAFYMVGTIEEALEKAKTLK.

153–160 contributes to the ATP binding site; it reads GGAGVGKT.

Belongs to the ATPase alpha/beta chains family. As to quaternary structure, F-type ATPases have 2 components, CF(1) - the catalytic core - and CF(0) - the membrane proton channel. CF(1) has five subunits: alpha(3), beta(3), gamma(1), delta(1), epsilon(1). CF(0) has three main subunits: a(1), b(2) and c(9-12). The alpha and beta chains form an alternating ring which encloses part of the gamma chain. CF(1) is attached to CF(0) by a central stalk formed by the gamma and epsilon chains, while a peripheral stalk is formed by the delta and b chains.

Its subcellular location is the cell inner membrane. The enzyme catalyses ATP + H2O + 4 H(+)(in) = ADP + phosphate + 5 H(+)(out). In terms of biological role, produces ATP from ADP in the presence of a proton gradient across the membrane. The catalytic sites are hosted primarily by the beta subunits. The chain is ATP synthase subunit beta from Rickettsia bellii (strain OSU 85-389).